The following is a 284-amino-acid chain: Lipase chaperone (284 aa).

Residues 4 to 24 (IAWSLGILVTIGALCAIVWPS) traverse the membrane as a helical segment.

The protein belongs to the lipase chaperone family.

The protein resides in the cell inner membrane. Its function is as follows. May be involved in the folding of the extracellular lipase during its passage through the periplasm. In Vibrio cholerae serotype O1 (strain ATCC 39315 / El Tor Inaba N16961), this protein is Lipase chaperone (lifO).